Reading from the N-terminus, the 885-residue chain is MAGVNEIRSTFLDYYRKNGHEVVPSSPLVPRNDPTLMFTNAGMVQFKNVFTGLEHRSYNRATTSQKCVRAGGKHNDLDNVGYTARHHTFFEMLGNFSFGDYFKEDAISFAWNLITKEFGLPKDKLLVTVYHTDDDAANYWKKIAGLSDDRIIRIATSDNFWAMGDTGPCGPCSEIFFDHGDHIWGGPPGSADEDGDRFIEIWNLVFMQFEQITPEQRIDLPRPSIDTGMGLERVAAVLQGVHDNYDIDLFKALIRASEEATGVKAEGEFRASHRVIADHLRASSFLIADGVLPSNEGRGYVLRRIMRRAMRHAQLLGAKEPLMWRLLPALIREMGQAYPELIRADALISETLKLEETRFRKTLDRGLGLLSDATESLVEGDRLDGETAFKLYDTYGFPLDLTQDALRQRGIAVDTDGFSAAMQRQKAEARANWAGSGEAATETIWFGIKDKVGATEFLGYETEVAEGVITALVRDGAEVQSAAEGDVVSVVVNQTPFYGESGGQQGDTGTISGEGFAIAIKDTQKKGEGVFVHIGEVTKGTAKTGDAVELKVDSVRRTRIRSNHSATHLLHEALRETLGSHVAQKGSLVAPDRLRFDFSHPKPISAEELTQVENLANEIILQNAPVSTRLMAVDDAIAEGAMALFGEKYGDEVRVVSMGTAKHGSKEGKAYSVELCGGTHVRQTGDIGLVRIVSEGAVAAGVRRMEALTGEAARLYLEEQDERVKAIAGALKTTPSEALERVNALLDERKKLERELADARKKLALGGGSADGGSAVEAVNGVNFLGKIVTGVSPRDLKPLADEGKKQVGSGVVLFIGIGEDSKASAVAAVTEDLVGRFSAVDLVRAASVALGGAGGGGRPDMAQAGGPDGDKADAAIAAVKALII.

4 residues coordinate Zn(2+): His-564, His-568, Cys-676, and His-680.

Belongs to the class-II aminoacyl-tRNA synthetase family. Requires Zn(2+) as cofactor.

It localises to the cytoplasm. It carries out the reaction tRNA(Ala) + L-alanine + ATP = L-alanyl-tRNA(Ala) + AMP + diphosphate. Catalyzes the attachment of alanine to tRNA(Ala) in a two-step reaction: alanine is first activated by ATP to form Ala-AMP and then transferred to the acceptor end of tRNA(Ala). Also edits incorrectly charged Ser-tRNA(Ala) and Gly-tRNA(Ala) via its editing domain. The sequence is that of Alanine--tRNA ligase from Brucella anthropi (strain ATCC 49188 / DSM 6882 / CCUG 24695 / JCM 21032 / LMG 3331 / NBRC 15819 / NCTC 12168 / Alc 37) (Ochrobactrum anthropi).